A 637-amino-acid chain; its full sequence is Chaperone protein DnaK (637 aa).

T198 is subject to Phosphothreonine; by autocatalysis. The tract at residues 600–637 is disordered; sequence IAQQQAQAQQAQGADAGAQSKDDDVVDAEFEEVKDDKK. The span at 601 to 618 shows a compositional bias: low complexity; the sequence is AQQQAQAQQAQGADAGAQ. The span at 623–637 shows a compositional bias: acidic residues; it reads DVVDAEFEEVKDDKK.

The protein belongs to the heat shock protein 70 family.

Functionally, acts as a chaperone. This Vibrio parahaemolyticus serotype O3:K6 (strain RIMD 2210633) protein is Chaperone protein DnaK.